Here is a 427-residue protein sequence, read N- to C-terminus: Trigger factor (427 aa).

The PPIase FKBP-type domain occupies 163-248 (GDTVVIDFVG…IHEVKAKEVP (86 aa)).

It belongs to the FKBP-type PPIase family. Tig subfamily.

The protein localises to the cytoplasm. It catalyses the reaction [protein]-peptidylproline (omega=180) = [protein]-peptidylproline (omega=0). Involved in protein export. Acts as a chaperone by maintaining the newly synthesized protein in an open conformation. Functions as a peptidyl-prolyl cis-trans isomerase. The protein is Trigger factor of Streptococcus pneumoniae serotype 2 (strain D39 / NCTC 7466).